A 25-amino-acid polypeptide reads, in one-letter code: uncharacterized protein (25 aa).

This is an uncharacterized protein from Archaeoglobus fulgidus (strain ATCC 49558 / DSM 4304 / JCM 9628 / NBRC 100126 / VC-16).